A 57-amino-acid chain; its full sequence is uncharacterized protein (57 aa).

Proetin of unknown function whose overexpression causes growth inhibition. Overexpression increases the expression of ergosterol synthesis genes. This is an uncharacterized protein from Saccharomyces cerevisiae (strain ATCC 204508 / S288c) (Baker's yeast).